The primary structure comprises 551 residues: Serendipity locus protein alpha (551 aa).

It is found in the cytoplasm. The protein resides in the cell membrane. Its function is as follows. Required for the cellularization of the syncytial blastoderm embryo. Involved in the localization of the actin filaments just prior to and during plasma membrane invagination. Sry-alpha together with nullo and bnk may provide auxiliary functions, by acting both to stabilize a large and dynamic microfilament structure and regulate its functions. The protein is Serendipity locus protein alpha (Sry-alpha) of Drosophila pseudoobscura pseudoobscura (Fruit fly).